Here is a 322-residue protein sequence, read N- to C-terminus: Deoxyhypusine hydroxylase (322 aa).

His-78, Glu-79, His-111, and Glu-112 together coordinate Fe cation. HEAT-like PBS-type repeat units follow at residues 109–135 (VRHE…CLKN), 203–229 (LRYR…GFND), 234–260 (FKHE…VLGR), and 267–293 (VRHE…YLND). 4 residues coordinate Fe cation: His-236, Glu-237, His-269, and Glu-270.

The protein belongs to the deoxyhypusine hydroxylase family. It depends on Fe(2+) as a cofactor.

It is found in the cytoplasm. The protein localises to the nucleus. The catalysed reaction is [eIF5A protein]-deoxyhypusine + AH2 + O2 = [eIF5A protein]-hypusine + A + H2O. Its pathway is protein modification; eIF5A hypusination. In terms of biological role, catalyzes the hydroxylation of the N(6)-(4-aminobutyl)-L-lysine intermediate to form hypusine, an essential post-translational modification only found in mature eIF-5A factor. This Candida glabrata (strain ATCC 2001 / BCRC 20586 / JCM 3761 / NBRC 0622 / NRRL Y-65 / CBS 138) (Yeast) protein is Deoxyhypusine hydroxylase.